The following is a 459-amino-acid chain: tRNA modification GTPase MnmE (459 aa).

Residues Arg23, Glu88, and Arg127 each contribute to the (6S)-5-formyl-5,6,7,8-tetrahydrofolate site. A TrmE-type G domain is found at 223-381 (GLNTVIVGKP…FKEVIKELFF (159 aa)). Asn233 serves as a coordination point for K(+). GTP-binding positions include 233–238 (NVGKSS), 252–258 (TDVPGTT), and 277–280 (DTAG). Position 237 (Ser237) interacts with Mg(2+). The K(+) site is built by Thr252, Val254, and Thr257. Mg(2+) is bound at residue Thr258. Residue Lys459 coordinates (6S)-5-formyl-5,6,7,8-tetrahydrofolate.

The protein belongs to the TRAFAC class TrmE-Era-EngA-EngB-Septin-like GTPase superfamily. TrmE GTPase family. Homodimer. Heterotetramer of two MnmE and two MnmG subunits. The cofactor is K(+).

It is found in the cytoplasm. Functionally, exhibits a very high intrinsic GTPase hydrolysis rate. Involved in the addition of a carboxymethylaminomethyl (cmnm) group at the wobble position (U34) of certain tRNAs, forming tRNA-cmnm(5)s(2)U34. This is tRNA modification GTPase MnmE from Clostridium novyi (strain NT).